The following is a 921-amino-acid chain: Protein translocase subunit SecA (921 aa).

ATP contacts are provided by residues Gln87, Gly105–Thr109, and Asp501. Positions Pro831–Glu886 are disordered. Positions Ala872 to Val881 are enriched in pro residues. Zn(2+) is bound by residues Cys905, Cys907, Cys916, and His917.

It belongs to the SecA family. In terms of assembly, monomer and homodimer. Part of the essential Sec protein translocation apparatus which comprises SecA, SecYEG and auxiliary proteins SecDF-YajC and YidC. It depends on Zn(2+) as a cofactor.

It is found in the cell inner membrane. The protein localises to the cytoplasm. The catalysed reaction is ATP + H2O + cellular proteinSide 1 = ADP + phosphate + cellular proteinSide 2.. Its function is as follows. Part of the Sec protein translocase complex. Interacts with the SecYEG preprotein conducting channel. Has a central role in coupling the hydrolysis of ATP to the transfer of proteins into and across the cell membrane, serving both as a receptor for the preprotein-SecB complex and as an ATP-driven molecular motor driving the stepwise translocation of polypeptide chains across the membrane. This is Protein translocase subunit SecA from Gluconobacter oxydans (strain 621H) (Gluconobacter suboxydans).